A 190-amino-acid chain; its full sequence is Protein GrpE (190 aa).

2 disordered regions span residues 1–22 and 170–190; these read MAEETNQSLEDQNVQVEEGQTI and EEGESKQSIRPARVKVGKPQS. The segment covering 181-190 has biased composition (basic residues); it reads ARVKVGKPQS.

The protein belongs to the GrpE family. Homodimer.

Its subcellular location is the cytoplasm. Participates actively in the response to hyperosmotic and heat shock by preventing the aggregation of stress-denatured proteins, in association with DnaK and GrpE. It is the nucleotide exchange factor for DnaK and may function as a thermosensor. Unfolded proteins bind initially to DnaJ; upon interaction with the DnaJ-bound protein, DnaK hydrolyzes its bound ATP, resulting in the formation of a stable complex. GrpE releases ADP from DnaK; ATP binding to DnaK triggers the release of the substrate protein, thus completing the reaction cycle. Several rounds of ATP-dependent interactions between DnaJ, DnaK and GrpE are required for fully efficient folding. This Leptospira biflexa serovar Patoc (strain Patoc 1 / Ames) protein is Protein GrpE.